Here is a 228-residue protein sequence, read N- to C-terminus: U1 small nuclear ribonucleoprotein C (228 aa).

Residues 11–43 form a Matrin-type; degenerate zinc finger; the sequence is ATVDYCDIFLTHDSASVRKAHNTGWKHKMQVEH. Positions 83-127 are disordered; it reads GQRGQPVGGPPRPPQPFHNGGRPGPPGRPPMGMFPPQRPMMPPPH. Residues 105–127 show a composition bias toward pro residues; sequence PGPPGRPPMGMFPPQRPMMPPPH.

This sequence belongs to the U1 small nuclear ribonucleoprotein C family. As to quaternary structure, U1 snRNP is composed of the 7 core Sm proteins B/B', D1, D2, D3, E, F and G that assemble in a heptameric protein ring on the Sm site of the small nuclear RNA to form the core snRNP, and at least 3 U1 snRNP-specific proteins U1-70K, U1-A and U1-C. U1-C interacts with U1 snRNA and the 5' splice-site region of the pre-mRNA.

Its subcellular location is the nucleus. Functionally, component of the spliceosomal U1 snRNP, which is essential for recognition of the pre-mRNA 5' splice-site and the subsequent assembly of the spliceosome. U1-C is directly involved in initial 5' splice-site recognition for both constitutive and regulated alternative splicing. The interaction with the 5' splice-site seems to precede base-pairing between the pre-mRNA and the U1 snRNA. Stimulates commitment or early (E) complex formation by stabilizing the base pairing of the 5' end of the U1 snRNA and the 5' splice-site region. The protein is U1 small nuclear ribonucleoprotein C of Batrachochytrium dendrobatidis (strain JAM81 / FGSC 10211) (Frog chytrid fungus).